Reading from the N-terminus, the 154-residue chain is Putative antiporter subunit mnhG2 (154 aa).

3 consecutive transmembrane segments (helical) span residues 11–31, 51–71, and 72–92; these read IASI…IGIV, VLLT…FFSV, and RLLL…HLIS.

The protein belongs to the CPA3 antiporters (TC 2.A.63) subunit G family. In terms of assembly, may form a heterooligomeric complex that consists of seven subunits: mnhA2, mnhB2, mnhC2, mnhD2, mnhE2, mnhF2 and mnhG2.

It is found in the cell membrane. The chain is Putative antiporter subunit mnhG2 (mnhG2) from Staphylococcus epidermidis (strain ATCC 35984 / DSM 28319 / BCRC 17069 / CCUG 31568 / BM 3577 / RP62A).